The sequence spans 245 residues: MAVRASFENNCEVGCFAKLTNAYCLVAIGGSENFYSVFEGELSDAIPVVHASIAGCRIIGRMCVGNRHGLLVPNNTTDQELQHIRNSLPDSVQIRRVEERLSALGNVTTCNDYVALVHPDLDRETEEILADVLKVEVFRQTVADQVLVGSYCVFSNQGGLVHPKTSIEDQDELSSLLQVPLVAGTVNRGSEVIAAGMVVNDWCAFCGLDTTSTELSVVESVFKLNEAKPSTIATSMRDSLIDSLT.

Tyr113 is modified (phosphotyrosine). Thr165 carries the phosphothreonine modification. Ser166 is modified (phosphoserine). A phosphoserine; by CK1 mark is found at Ser174 and Ser175. Ser235 carries the post-translational modification Phosphoserine; by PKC. 2 positions are modified to phosphoserine: Ser239 and Ser243.

Belongs to the eIF-6 family. Monomer. Associates with the 60S ribosomal subunit. Interacts with RACK1. Interacts with DICER1, AGO2, TARBP2, MOV10 and RPL7A; they form a large RNA-induced silencing complex (RISC). In terms of processing, phosphorylation at Ser-174 and Ser-175 by CSNK1D/CK1 promotes nuclear export. Post-translationally, ufmylated by UFL1. As to expression, detected in bladder, duodenum, liver, esophagus, pancreas, adipose tissue, megakaryocytes and testis with lower levels in muscle (at protein level).

The protein localises to the cytoplasm. Its subcellular location is the nucleus. The protein resides in the nucleolus. In terms of biological role, binds to the 60S ribosomal subunit and prevents its association with the 40S ribosomal subunit to form the 80S initiation complex in the cytoplasm. Behaves as a stimulatory translation initiation factor downstream insulin/growth factors. Is also involved in ribosome biogenesis. Associates with pre-60S subunits in the nucleus and is involved in its nuclear export. Cytoplasmic release of TIF6 from 60S subunits and nuclear relocalization is promoted by a RACK1 (RACK1)-dependent protein kinase C activity. In tissues responsive to insulin, controls fatty acid synthesis and glycolysis by exerting translational control of adipogenic transcription factors such as CEBPB, CEBPD and ATF4 that have G/C rich or uORF in their 5'UTR. Required for ROS-dependent megakaryocyte maturation and platelets formation, controls the expression of mitochondrial respiratory chain genes involved in reactive oxygen species (ROS) synthesis. Involved in miRNA-mediated gene silencing by the RNA-induced silencing complex (RISC). Required for both miRNA-mediated translational repression and miRNA-mediated cleavage of complementary mRNAs by RISC. Modulates cell cycle progression and global translation of pre-B cells, its activation seems to be rate-limiting in tumorigenesis and tumor growth. The protein is Eukaryotic translation initiation factor 6 (Eif6) of Mus musculus (Mouse).